The sequence spans 95 residues: NELL2-interacting cell ontogeny regulator 1 (95 aa).

Residues 1–34 form the signal peptide; the sequence is MAPPPACRSPMSPPPPPLLLLLLSLALLGARARA.

Belongs to the NICOL family. Interacts with NELL2; triggers epididymal differentiation. Interacts with cell surface receptor TFRC; the interaction mediates uptake of NICOL1 into fibroblasts. As to expression, detected in the brain (at protein level). Also expressed at low levels in the kidney, primarily in tubular epithelial cells.

It is found in the secreted. Its subcellular location is the cytoplasm. The protein localises to the perinuclear region. In terms of biological role, mRNA-binding protein which interacts with a range of target mRNAs including SERPINE1, ACTA2, CCN2 and COL4A1 and may promote extracellular matrix production. Binds to the 3'-UTR of SERPINE1 mRNA and stabilizes the mRNA, possibly by competing for binding with SERBP1 and preventing SERBP1-mediated mRNA degradation. Also binds to the 3'-UTR of ACTA2. Testis-derived lumicrine factor that triggers epididymal differentiation and sperm maturation. This is NELL2-interacting cell ontogeny regulator 1 from Homo sapiens (Human).